The chain runs to 393 residues: Nucleosome assembly protein 1-like 1-B (393 aa).

Positions 1–10 (MANIDNKEQT) are enriched in basic and acidic residues. The disordered stretch occupies residues 1–38 (MANIDNKEQTELDQQDMEDVEDVEEEETGEEANSKARQ). Acidic residues predominate over residues 11-30 (ELDQQDMEDVEDVEEEETGE). Residues 126–151 (YEPTEEECEWKVDEEEDIAEDLKEKA) carry the NAP1L motif motif. Positions 274–280 (IKKKQKH) match the Nuclear localization signal motif. Residues 347–377 (AIEDDDDDYDEEGEEADDEEGEEEADEDHDP) are compositionally biased toward acidic residues. Residues 347-393 (AIEDDDDDYDEEGEEADDEEGEEEADEDHDPDFDPKKAQNPAECKQQ) form a disordered region.

Belongs to the nucleosome assembly protein (NAP) family. In terms of assembly, forms homomultimers. Interacts with histone b4. Interacts with the B-type cyclins ccnb1 and ccnb2. Post-translationally, phosphorylated by cyclin B-cdc2 kinase complexes.

The protein resides in the cytoplasm. Its subcellular location is the nucleus. Functionally, acts as a chaperone for the linker histone to facilitate deposition of histone B4 onto linker DNA. Required for both remodeling of sperm chromatin into nucleosomes, and linker histone binding to nucleosome core dimers. Plays a role in tissue-specific gene regulation. Required for primitive hemopoiesis, acting upstream of tal1/scl. This is Nucleosome assembly protein 1-like 1-B (nap1l1-b) from Xenopus laevis (African clawed frog).